The chain runs to 542 residues: MAKDIKFSEDARRAMLRGVDQLANAVKVTLGPKGRNVVLEKKFGSPLITNDGVTIAKEIELEDPFENMGAKLVSEVASKTNDVAGDGTTTATVLAQAMIQEGLKNVTAGANPVGVRRGIEKAVATAIEELKAISKPIESKESIAQVAAISSGDEEVGKLIAEAMERVGNDGVITIEESKGFATELDVVEGMQFDRGYTSPYMVTDSDKMEAVLEKPYILITDKKINNIQEILSVLEQVVQQGRPMLIIAEDVEGEAQATLVLNKLRGTFNVVAVKAPGFGDRRKAMLEDIAVLTGGQVITEDLGLELKTATVDQLGTANKVVVTKDDTTIVEGAGDSTQISARVNQIRAQMEETTSEFDREKLQERLAKLAGGVAVVKVGAATETELKERKLRIEDALNSTRAAVEEGIVAGGGTALVSIYNKVAALEAEGDVETGINIVLRSLEEPVRQIAHNAGLEGSVIVERLKHEAVGVGFNAANGEWVNMIDAGIVDPTKVTRSALQNASSVAALLLTTEAVVADQPDENGPAAGPDMGMGGMGGMM.

ATP is bound by residues 29-32 (TLGP), 86-90 (DGTTT), Gly413, 476-478 (NAA), and Asp492. The tract at residues 521 to 542 (QPDENGPAAGPDMGMGGMGGMM) is disordered. The segment covering 533 to 542 (MGMGGMGGMM) has biased composition (gly residues).

The protein belongs to the chaperonin (HSP60) family. Forms a cylinder of 14 subunits composed of two heptameric rings stacked back-to-back. Interacts with the co-chaperonin GroES.

Its subcellular location is the cytoplasm. The catalysed reaction is ATP + H2O + a folded polypeptide = ADP + phosphate + an unfolded polypeptide.. In terms of biological role, together with its co-chaperonin GroES, plays an essential role in assisting protein folding. The GroEL-GroES system forms a nano-cage that allows encapsulation of the non-native substrate proteins and provides a physical environment optimized to promote and accelerate protein folding. The sequence is that of Chaperonin GroEL from Listeria innocua serovar 6a (strain ATCC BAA-680 / CLIP 11262).